The primary structure comprises 665 residues: tRNA 5-methylaminomethyl-2-thiouridine biosynthesis bifunctional protein MnmC (665 aa).

Positions 1-235 are tRNA (mnm(5)s(2)U34)-methyltransferase; sequence MTITRHAQID…KWEVLRGTFI (235 aa). Residues 266 to 665 form an FAD-dependent cmnm(5)s(2)U34 oxidoreductase region; that stretch reads IGAGLAGCAT…RGKGKQTVGH (400 aa).

The protein in the N-terminal section; belongs to the methyltransferase superfamily. tRNA (mnm(5)s(2)U34)-methyltransferase family. It in the C-terminal section; belongs to the DAO family. FAD serves as cofactor.

It is found in the cytoplasm. The enzyme catalyses 5-aminomethyl-2-thiouridine(34) in tRNA + S-adenosyl-L-methionine = 5-methylaminomethyl-2-thiouridine(34) in tRNA + S-adenosyl-L-homocysteine + H(+). In terms of biological role, catalyzes the last two steps in the biosynthesis of 5-methylaminomethyl-2-thiouridine (mnm(5)s(2)U) at the wobble position (U34) in tRNA. Catalyzes the FAD-dependent demodification of cmnm(5)s(2)U34 to nm(5)s(2)U34, followed by the transfer of a methyl group from S-adenosyl-L-methionine to nm(5)s(2)U34, to form mnm(5)s(2)U34. The chain is tRNA 5-methylaminomethyl-2-thiouridine biosynthesis bifunctional protein MnmC from Pseudomonas syringae pv. syringae (strain B728a).